The primary structure comprises 377 residues: Anhydro-N-acetylmuramic acid kinase (377 aa).

Position 12–19 (12–19) interacts with ATP; it reads GTSLDGID.

The protein belongs to the anhydro-N-acetylmuramic acid kinase family.

It carries out the reaction 1,6-anhydro-N-acetyl-beta-muramate + ATP + H2O = N-acetyl-D-muramate 6-phosphate + ADP + H(+). Its pathway is amino-sugar metabolism; 1,6-anhydro-N-acetylmuramate degradation. It participates in cell wall biogenesis; peptidoglycan recycling. Catalyzes the specific phosphorylation of 1,6-anhydro-N-acetylmuramic acid (anhMurNAc) with the simultaneous cleavage of the 1,6-anhydro ring, generating MurNAc-6-P. Is required for the utilization of anhMurNAc either imported from the medium or derived from its own cell wall murein, and thus plays a role in cell wall recycling. In Methylorubrum populi (strain ATCC BAA-705 / NCIMB 13946 / BJ001) (Methylobacterium populi), this protein is Anhydro-N-acetylmuramic acid kinase.